Consider the following 428-residue polypeptide: 5'-deoxyadenosine deaminase (428 aa).

Zn(2+) is bound by residues His-59 and His-61. 2 residues coordinate substrate: Glu-88 and His-180. Residue His-207 participates in Zn(2+) binding. Substrate is bound by residues Glu-210 and Asp-296. Asp-296 provides a ligand contact to Zn(2+).

Belongs to the metallo-dependent hydrolases superfamily. MTA/SAH deaminase family. Homotetramer. It depends on Zn(2+) as a cofactor.

It catalyses the reaction 5'-deoxyadenosine + H2O + H(+) = 5'-deoxyinosine + NH4(+). It carries out the reaction S-adenosyl-L-homocysteine + H2O + H(+) = S-inosyl-L-homocysteine + NH4(+). The enzyme catalyses S-methyl-5'-thioadenosine + H2O + H(+) = S-methyl-5'-thioinosine + NH4(+). The catalysed reaction is adenosine + H2O + H(+) = inosine + NH4(+). It functions in the pathway amino-acid biosynthesis; S-adenosyl-L-methionine biosynthesis. In terms of biological role, catalyzes the deamination of three SAM-derived enzymatic products, namely 5'-deoxyadenosine, S-adenosyl-L-homocysteine, and 5'-methylthioadenosine, to produce the inosine analogs. Can also deaminate adenosine. The preferred substrate for this enzyme is 5'-deoxyadenosine, but all these substrates are efficiently deaminated. Likely functions in a S-adenosyl-L-methionine (SAM) recycling pathway from S-adenosyl-L-homocysteine (SAH) produced from SAM-dependent methylation reactions. May also be involved in the recycling of 5'-deoxyadenosine, whereupon the 5'-deoxyribose moiety of 5'-deoxyinosine is further metabolized to deoxyhexoses used for the biosynthesis of aromatic amino acids in methanogens. The sequence is that of 5'-deoxyadenosine deaminase from Methanococcus aeolicus (strain ATCC BAA-1280 / DSM 17508 / OCM 812 / Nankai-3).